Here is a 260-residue protein sequence, read N- to C-terminus: UPF0246 protein SCO2297 (260 aa).

The protein belongs to the UPF0246 family.

The sequence is that of UPF0246 protein SCO2297 from Streptomyces coelicolor (strain ATCC BAA-471 / A3(2) / M145).